The primary structure comprises 396 residues: Tyrosine--tRNA ligase (396 aa).

The 'HIGH' region motif lies at 39-48; sequence PTAPDLHLGH. The 'KMSKS' region signature appears at 223–227; that stretch reads KMSKS. Residue lysine 226 coordinates ATP. Residues 334–395 form the S4 RNA-binding domain; that stretch reads LPVPQLLKQA…GKRKFARVTV (62 aa).

This sequence belongs to the class-I aminoacyl-tRNA synthetase family. TyrS type 2 subfamily. In terms of assembly, homodimer.

It is found in the cytoplasm. It carries out the reaction tRNA(Tyr) + L-tyrosine + ATP = L-tyrosyl-tRNA(Tyr) + AMP + diphosphate + H(+). In terms of biological role, catalyzes the attachment of tyrosine to tRNA(Tyr) in a two-step reaction: tyrosine is first activated by ATP to form Tyr-AMP and then transferred to the acceptor end of tRNA(Tyr). The polypeptide is Tyrosine--tRNA ligase (Thiobacillus denitrificans (strain ATCC 25259 / T1)).